We begin with the raw amino-acid sequence, 293 residues long: Phosphate import ATP-binding protein PstB (293 aa).

The region spanning 46 to 288 (MTCRKVDVHY…PGHQLTEDYI (243 aa)) is the ABC transporter domain. 78-85 (GPSGCGKS) is an ATP binding site.

Belongs to the ABC transporter superfamily. Phosphate importer (TC 3.A.1.7) family. As to quaternary structure, the complex is composed of two ATP-binding proteins (PstB), two transmembrane proteins (PstC and PstA) and a solute-binding protein (PstS).

It is found in the cell inner membrane. It catalyses the reaction phosphate(out) + ATP + H2O = ADP + 2 phosphate(in) + H(+). Part of the ABC transporter complex PstSACB involved in phosphate import. Responsible for energy coupling to the transport system. The protein is Phosphate import ATP-binding protein PstB of Desulfotalea psychrophila (strain LSv54 / DSM 12343).